The following is a 470-amino-acid chain: Siroheme synthase (470 aa).

Residues 1 to 203 are precorrin-2 dehydrogenase /sirohydrochlorin ferrochelatase; that stretch reads MDYLPIFVEL…GQIQQAEKQL (203 aa). NAD(+) contacts are provided by residues 22-23 and 43-44; these read EV and PE. S128 is subject to Phosphoserine. Residues 214 to 470 form a uroporphyrinogen-III C-methyltransferase region; it reads GELALVGAGP…ISRPAVVDFA (257 aa). P223 contacts S-adenosyl-L-methionine. D246 acts as the Proton acceptor in catalysis. The Proton donor role is filled by K268. Residues 299–301, I304, 329–330, M381, and G410 each bind S-adenosyl-L-methionine; these read GGD and TA.

In the N-terminal section; belongs to the precorrin-2 dehydrogenase / sirohydrochlorin ferrochelatase family. It in the C-terminal section; belongs to the precorrin methyltransferase family.

The enzyme catalyses uroporphyrinogen III + 2 S-adenosyl-L-methionine = precorrin-2 + 2 S-adenosyl-L-homocysteine + H(+). It catalyses the reaction precorrin-2 + NAD(+) = sirohydrochlorin + NADH + 2 H(+). The catalysed reaction is siroheme + 2 H(+) = sirohydrochlorin + Fe(2+). It functions in the pathway cofactor biosynthesis; adenosylcobalamin biosynthesis; precorrin-2 from uroporphyrinogen III: step 1/1. It participates in cofactor biosynthesis; adenosylcobalamin biosynthesis; sirohydrochlorin from precorrin-2: step 1/1. The protein operates within porphyrin-containing compound metabolism; siroheme biosynthesis; precorrin-2 from uroporphyrinogen III: step 1/1. Its pathway is porphyrin-containing compound metabolism; siroheme biosynthesis; siroheme from sirohydrochlorin: step 1/1. It functions in the pathway porphyrin-containing compound metabolism; siroheme biosynthesis; sirohydrochlorin from precorrin-2: step 1/1. In terms of biological role, multifunctional enzyme that catalyzes the SAM-dependent methylations of uroporphyrinogen III at position C-2 and C-7 to form precorrin-2 via precorrin-1. Then it catalyzes the NAD-dependent ring dehydrogenation of precorrin-2 to yield sirohydrochlorin. Finally, it catalyzes the ferrochelation of sirohydrochlorin to yield siroheme. This Photorhabdus laumondii subsp. laumondii (strain DSM 15139 / CIP 105565 / TT01) (Photorhabdus luminescens subsp. laumondii) protein is Siroheme synthase.